The sequence spans 97 residues: MIKSSVGGNEGKSKFFDQEKRLERTWNNSNWGKQGIISPVDGDMKIIDIELEKKMTKLEHENKLMKNALYELSRMENNDYAAWVIKVLFGEVAHGAK.

Residues 49-78 (IELEKKMTKLEHENKLMKNALYELSRMENN) are a coiled coil.

It belongs to the phi29likevirus DNA replication protein 1 family. Homomultimer. Self-associates into large complexes forming long filamentous structures. Interacts (via N-terminus) with the primer terminal protein.

It localises to the host membrane. In terms of biological role, protein that assembles into highly ordered structures and provides a specific site for viral DNA replication. Probably anchors the viral DNA replisome to the host membrane. This Bacillus subtilis (Bacteriophage PZA) protein is DNA replication protein 1 (1C).